Here is a 478-residue protein sequence, read N- to C-terminus: BTB/POZ domain-containing protein 17 (478 aa).

A signal peptide spans 1–28 (MLRKGSCKPGSWGSFWAILALVGLVTRA). N-linked (GlcNAc...) asparagine glycans are attached at residues N61, N100, N195, and N307. In terms of domain architecture, BTB spans 63-132 (SDVILRVQAV…LYCGELTVLL (70 aa)). One can recognise a BACK domain in the interval 169–269 (AVGWYHYAVS…IPPAQLFQLQ (101 aa)).

The protein resides in the secreted. The protein is BTB/POZ domain-containing protein 17 (Btbd17) of Mus musculus (Mouse).